Reading from the N-terminus, the 571-residue chain is Apolipoprotein N-acyltransferase (571 aa).

6 helical membrane-spanning segments follow: residues 13 to 33, 51 to 68, 72 to 92, 118 to 138, 152 to 172, and 199 to 219; these read VVLW…IALV, LYAA…GLRY, LMFL…VLFI, LVAA…FTGI, MLIQ…IVCV, and LVTA…SMNA. The CN hydrolase domain maps to 234–527; it reads NELTVYEQDI…SDVIYAQPRR (294 aa). Glu-275 (proton acceptor) is an active-site residue. Lys-380 is an active-site residue. Cys-430 (nucleophile) is an active-site residue. A helical membrane pass occupies residues 542–562; sequence AGLMGAATLCGLAWMTFEWLM.

It belongs to the CN hydrolase family. Apolipoprotein N-acyltransferase subfamily.

The protein localises to the cell inner membrane. It catalyses the reaction N-terminal S-1,2-diacyl-sn-glyceryl-L-cysteinyl-[lipoprotein] + a glycerophospholipid = N-acyl-S-1,2-diacyl-sn-glyceryl-L-cysteinyl-[lipoprotein] + a 2-acyl-sn-glycero-3-phospholipid + H(+). Its pathway is protein modification; lipoprotein biosynthesis (N-acyl transfer). Its function is as follows. Catalyzes the phospholipid dependent N-acylation of the N-terminal cysteine of apolipoprotein, the last step in lipoprotein maturation. The protein is Apolipoprotein N-acyltransferase of Rhodopirellula baltica (strain DSM 10527 / NCIMB 13988 / SH1).